A 400-amino-acid polypeptide reads, in one-letter code: E3 ubiquitin-protein ligase RNF149 (400 aa).

A signal peptide spans 1 to 32; it reads MAWRRREASVGARGVLALALLALALCVPGARG. N-linked (GlcNAc...) asparagine glycans are attached at residues Asn52 and Asn145. Residues 67-175 form the PA domain; the sequence is SSPKEGAHGL…PKGREILELV (109 aa). A helical membrane pass occupies residues 201-221; sequence VVFVAIAFITMMIISLAWLIF. The segment at 269 to 310 adopts an RING-type; atypical zinc-finger fold; sequence CAVCIENFKVKDIIRILPCKHIFHRICIDPWLLDHRTCPMCK. Positions 325–400 are disordered; the sequence is DVQEMPAPES…SDSRHGGPIS (76 aa). Ser345 is modified (phosphoserine). Low complexity predominate over residues 356–368; sequence DSSPPSASPAESE. Basic and acidic residues predominate over residues 389-400; that stretch reads GRSDSRHGGPIS.

It localises to the membrane. The catalysed reaction is S-ubiquitinyl-[E2 ubiquitin-conjugating enzyme]-L-cysteine + [acceptor protein]-L-lysine = [E2 ubiquitin-conjugating enzyme]-L-cysteine + N(6)-ubiquitinyl-[acceptor protein]-L-lysine.. Its pathway is protein modification; protein ubiquitination. E3 ubiquitin-protein ligase. Ubiquitinates BRAF, inducing its proteasomal degradation. This chain is E3 ubiquitin-protein ligase RNF149 (RNF149), found in Homo sapiens (Human).